The chain runs to 354 residues: NADH-quinone oxidoreductase subunit H (354 aa).

Transmembrane regions (helical) follow at residues 22 to 42, 91 to 111, 124 to 144, 168 to 188, 203 to 223, 255 to 275, 291 to 311, and 326 to 346; these read ILIRAVIIVVPLLLCVAYLIL, YLIAPLMVLMPAVAVWAVIPF, LLYVMAISSVGVYGVILAGWA, MGFALVTVLMVAGSLNLSAIV, ILSWNWLPLLPMFGVYFISGV, LFFLAEYINMIIISTMTALMF, IPGFFWLVIKVFLLLSVFIWI, and LGWKVFIPLTVAWLIIVAIWI.

Belongs to the complex I subunit 1 family. As to quaternary structure, NDH-1 is composed of 14 different subunits. Subunits NuoA, H, J, K, L, M, N constitute the membrane sector of the complex.

The protein resides in the cell inner membrane. The enzyme catalyses a quinone + NADH + 5 H(+)(in) = a quinol + NAD(+) + 4 H(+)(out). NDH-1 shuttles electrons from NADH, via FMN and iron-sulfur (Fe-S) centers, to quinones in the respiratory chain. The immediate electron acceptor for the enzyme in this species is believed to be ubiquinone. Couples the redox reaction to proton translocation (for every two electrons transferred, four hydrogen ions are translocated across the cytoplasmic membrane), and thus conserves the redox energy in a proton gradient. This subunit may bind ubiquinone. This Cupriavidus necator (strain ATCC 17699 / DSM 428 / KCTC 22496 / NCIMB 10442 / H16 / Stanier 337) (Ralstonia eutropha) protein is NADH-quinone oxidoreductase subunit H.